The sequence spans 452 residues: Chromosomal replication initiator protein DnaA (452 aa).

Residues 1 to 80 (MSSTVSTLWR…NNDQFMVKIQ (80 aa)) are domain I, interacts with DnaA modulators. The interval 80–114 (QDGIKPTEKTTTNVEQKTQNENCHNEITSQQNYRS) is domain II. Residues 115 to 332 (YLNKNHVFDN…GALNRVHAHA (218 aa)) are domain III, AAA+ region. Positions 160, 162, 163, and 164 each coordinate ATP. The segment at 333-452 (EFTGKAITID…WSNLIRTLSV (120 aa)) is domain IV, binds dsDNA.

It belongs to the DnaA family. In terms of assembly, oligomerizes as a right-handed, spiral filament on DNA at oriC.

Its subcellular location is the cytoplasm. Its function is as follows. Plays an essential role in the initiation and regulation of chromosomal replication. ATP-DnaA binds to the origin of replication (oriC) to initiate formation of the DNA replication initiation complex once per cell cycle. Binds the DnaA box (a 9 base pair repeat at the origin) and separates the double-stranded (ds)DNA. Forms a right-handed helical filament on oriC DNA; dsDNA binds to the exterior of the filament while single-stranded (ss)DNA is stabiized in the filament's interior. The ATP-DnaA-oriC complex binds and stabilizes one strand of the AT-rich DNA unwinding element (DUE), permitting loading of DNA polymerase. After initiation quickly degrades to an ADP-DnaA complex that is not apt for DNA replication. Binds acidic phospholipids. The sequence is that of Chromosomal replication initiator protein DnaA from Histophilus somni (strain 129Pt) (Haemophilus somnus).